Here is a 361-residue protein sequence, read N- to C-terminus: Rhomboid domain-containing protein 2 (361 aa).

The next 5 helical transmembrane spans lie at 19–39, 63–83, 100–120, 158–178, and 182–202; these read SATF…LFLL, LVTY…AIII, CFFT…FESV, FGVV…SWLI, and SFLS…TYCY. Disordered stretches follow at residues 265 to 287 and 318 to 361; these read PSYP…PPGH and PASA…VAMP. Polar residues-rich tracts occupy residues 267–276 and 318–328; these read YPVTQMQHAS and PASAGTSQGVQ.

This sequence belongs to the peptidase S54 family. Might form homotrimers; these trimers are only formed in retina. In terms of tissue distribution, widely expressed, including in retina and brain (at protein level), as well as in kidney, testis and ovary. Expressed in all layers of the retina, including inner segments of photoreceptor cells and ganglion cells (at protein level).

It localises to the golgi apparatus. The protein resides in the cis-Golgi network membrane. In Mus musculus (Mouse), this protein is Rhomboid domain-containing protein 2 (Rhbdd2).